Reading from the N-terminus, the 388-residue chain is Chorismate synthase (388 aa).

Positions 39 and 45 each coordinate NADP(+). FMN is bound by residues 132 to 134, 251 to 252, Gly-296, 311 to 315, and Arg-337; these read RSS, NA, and KPIPT.

This sequence belongs to the chorismate synthase family. As to quaternary structure, homotetramer. FMNH2 serves as cofactor.

It carries out the reaction 5-O-(1-carboxyvinyl)-3-phosphoshikimate = chorismate + phosphate. The protein operates within metabolic intermediate biosynthesis; chorismate biosynthesis; chorismate from D-erythrose 4-phosphate and phosphoenolpyruvate: step 7/7. Functionally, catalyzes the anti-1,4-elimination of the C-3 phosphate and the C-6 proR hydrogen from 5-enolpyruvylshikimate-3-phosphate (EPSP) to yield chorismate, which is the branch point compound that serves as the starting substrate for the three terminal pathways of aromatic amino acid biosynthesis. This reaction introduces a second double bond into the aromatic ring system. This Staphylococcus aureus (strain COL) protein is Chorismate synthase.